Consider the following 257-residue polypeptide: Very long chain fatty acid elongase F (257 aa).

The next 7 helical transmembrane spans lie at Ile10–Val30, Ile55–Leu75, Leu98–Val118, Phe135–Phe155, Cys158–Ser178, Ile191–Ala211, and Leu221–Tyr241.

It belongs to the ELO family. In terms of tissue distribution, highly expressed in females. Little or no expression detected in males.

The protein localises to the endoplasmic reticulum membrane. It carries out the reaction a very-long-chain acyl-CoA + malonyl-CoA + H(+) = a very-long-chain 3-oxoacyl-CoA + CO2 + CoA. The protein operates within lipid metabolism; fatty acid biosynthesis. Functionally, condensing enzyme that elongates saturated and monounsaturated very long chain fatty acids, to yield products up to 30 carbons in length. May also elongate diunsaturated fatty acids. Important for courtship behavior where it probably has a role in female pheromone biosynthesis. The polypeptide is Very long chain fatty acid elongase F (Drosophila melanogaster (Fruit fly)).